The primary structure comprises 317 residues: Brain-specific serine protease 4 (317 aa).

The first 32 residues, 1-32 (MVVSGAPPALGGGCLGTFTSLLLLASTAILNA), serve as a signal peptide directing secretion. The 241-residue stretch at 50–290 (VVGGEDSTDS…HRSWVEKIVQ (241 aa)) folds into the Peptidase S1 domain. Asparagine 70 is a glycosylation site (N-linked (GlcNAc...) asparagine). Cysteine 75 and cysteine 91 form a disulfide bridge. Active-site charge relay system residues include histidine 90 and aspartate 141. 3 cysteine pairs are disulfide-bonded: cysteine 175–cysteine 248, cysteine 208–cysteine 227, and cysteine 238–cysteine 266. Serine 242 functions as the Charge relay system in the catalytic mechanism.

This sequence belongs to the peptidase S1 family. In terms of tissue distribution, expressed abundantly in the epithelial cells of the airways, including trachea, esophagus and fetal lung. Scarce in adult lung. Expressed at low levels in placenta, pancreas, prostate and thyroid gland.

The protein localises to the secreted. In terms of biological role, preferentially cleaves the synthetic substrate H-D-Leu-Thr-Arg-pNA compared to tosyl-Gly-Pro-Arg-pNA. This chain is Brain-specific serine protease 4 (PRSS22), found in Homo sapiens (Human).